The chain runs to 355 residues: uncharacterized protein (355 aa).

A helical membrane pass occupies residues 6–26 (LLTPYFLLSILSVGVFTATAA).

Belongs to the SUN family.

It is found in the membrane. This is an uncharacterized protein from Saccharomyces cerevisiae (strain ATCC 204508 / S288c) (Baker's yeast).